The primary structure comprises 213 residues: Pyridoxine/pyridoxamine 5'-phosphate oxidase (213 aa).

Substrate contacts are provided by residues 10-13 (REEY) and K68. FMN contacts are provided by residues 63 to 68 (RMLLLK), 78 to 79 (FT), K85, and Q107. Residues Y125, R129, and S133 each coordinate substrate. FMN is bound by residues 142 to 143 (QS) and W186. 192-194 (RLH) lines the substrate pocket. Residue R196 participates in FMN binding.

This sequence belongs to the pyridoxamine 5'-phosphate oxidase family. As to quaternary structure, homodimer. FMN is required as a cofactor.

The catalysed reaction is pyridoxamine 5'-phosphate + O2 + H2O = pyridoxal 5'-phosphate + H2O2 + NH4(+). The enzyme catalyses pyridoxine 5'-phosphate + O2 = pyridoxal 5'-phosphate + H2O2. It participates in cofactor metabolism; pyridoxal 5'-phosphate salvage; pyridoxal 5'-phosphate from pyridoxamine 5'-phosphate: step 1/1. The protein operates within cofactor metabolism; pyridoxal 5'-phosphate salvage; pyridoxal 5'-phosphate from pyridoxine 5'-phosphate: step 1/1. Functionally, catalyzes the oxidation of either pyridoxine 5'-phosphate (PNP) or pyridoxamine 5'-phosphate (PMP) into pyridoxal 5'-phosphate (PLP). The sequence is that of Pyridoxine/pyridoxamine 5'-phosphate oxidase from Nocardioides sp. (strain ATCC BAA-499 / JS614).